The primary structure comprises 263 residues: Versicolorin reductase 1 (263 aa).

4 residues coordinate NADP(+): Ile22, Asp68, Asn95, and Arg128. Active-site proton donor residues include Ser144 and Ser145. The NADP(+) site is built by Tyr159, Lys163, Ile192, and Thr194. Residue Tyr159 is the Proton acceptor of the active site. The Lowers pKa of active site Tyr role is filled by Lys163.

It belongs to the short-chain dehydrogenases/reductases (SDR) family.

It is found in the cytoplasm. The protein localises to the cytosol. The protein operates within mycotoxin biosynthesis. Versicolorin reductase; part of the fragmented gene cluster that mediates the biosynthesis of dothistromin (DOTH), a polyketide toxin very similar in structure to the aflatoxin precursor, versicolorin B. The first step of the pathway is the conversion of acetate to norsolorinic acid (NOR) and requires the fatty acid synthase subunits hexA and hexB, as well as the polyketide synthase pksA. PksA combines a hexanoyl starter unit and 7 malonyl-CoA extender units to synthesize the precursor NOR. The hexanoyl starter unit is provided to the acyl-carrier protein (ACP) domain by the fungal fatty acid synthase hexA/hexB. The second step is the conversion of NOR to averantin (AVN) and requires the norsolorinic acid ketoreductase nor1, which catalyzes the dehydration of norsolorinic acid to form (1'S)-averantin. The cytochrome P450 monooxygenase avnA then catalyzes the hydroxylation of AVN to 5'hydroxyaverantin (HAVN). The next step is performed by adhA that transforms HAVN to averufin (AVF). Averufin might then be converted to hydroxyversicolorone by cypX and avfA. Hydroxyversicolorone is further converted versiconal hemiacetal acetate (VHA) by moxY. VHA is then the substrate for the versiconal hemiacetal acetate esterase est1 to yield versiconal (VAL). Versicolorin B synthase vbsA then converts VAL to versicolorin B (VERB) by closing the bisfuran ring. Then, the activity of the versicolorin B desaturase verB leads to versicolorin A (VERA). DotB, a predicted chloroperoxidase, may perform epoxidation of the A-ring of VERA. Alternatively, a cytochrome P450, such as cypX or avnA could catalyze this step. It is also possible that another, uncharacterized, cytochrome P450 enzyme is responsible for this step. Opening of the epoxide could potentially be achieved by the epoxide hydrolase epoA. However, epoA seems not to be required for DOTH biosynthesis, but other epoxide hydrolases may have the ability to complement this hydrolysis. Alternatively, opening of the epoxide ring could be achieved non-enzymatically. The next step is the deoxygenation of ring A to yield the 5,8-dihydroxyanthraquinone which is most likely catalyzed by the NADPH dehydrogenase encoded by ver1. The last stages of DOTH biosynthesis are proposed to involve hydroxylation of the bisfuran. OrdB and norB might have oxidative roles here. An alternative possibility is that cytochrome P450 monoogenases such as avnA and cypX might perform these steps in addition to previously proposed steps. This Dothistroma septosporum (Red band needle blight fungus) protein is Versicolorin reductase 1.